We begin with the raw amino-acid sequence, 345 residues long: DNA-directed RNA polymerases I and III subunit rpac1 (345 aa).

Polar residues predominate over residues 1–11 (MVNKSTTNGVS). Positions 1–20 (MVNKSTTNGVSDPNLENKRT) are disordered.

Belongs to the archaeal Rpo3/eukaryotic RPB3 RNA polymerase subunit family. Component of the RNA polymerase I (Pol I) and RNA polymerase III (Pol III) complexes consisting of at least 13 and 17 subunits, respectively. Interacts with RPAC19/RPAC2.

It localises to the nucleus. DNA-dependent RNA polymerase catalyzes the transcription of DNA into RNA using the four ribonucleoside triphosphates as substrates. Common component of RNA polymerases I and III which synthesize ribosomal RNA precursors and small RNAs, such as 5S rRNA and tRNAs, respectively. RPAC1 is part of the Pol core element with the central large cleft and probably a clamp element that moves to open and close the cleft. The protein is DNA-directed RNA polymerases I and III subunit rpac1 (polr1c) of Dictyostelium discoideum (Social amoeba).